We begin with the raw amino-acid sequence, 390 residues long: GLH-binding kinase 1 (390 aa).

Residues 38–338 (YVNLSFLNAG…VEDALNHPYV (301 aa)) form the Protein kinase domain. ATP contacts are provided by residues 44 to 52 (LNAGAQGTV) and K67. D164 functions as the Proton acceptor in the catalytic mechanism. At S198 the chain carries Phosphoserine. Y200 bears the Phosphotyrosine mark.

It belongs to the protein kinase superfamily. CMGC Ser/Thr protein kinase family. MAP kinase subfamily. As to quaternary structure, interacts with glh-1, glh-2 (via C-terminus), glh-3 (via C-terminus) and glh-4 (via C-terminus). Interacts with csn-5; the interaction may prevent glh-1 degradation induced by kgb-1. Interacts with fos-1. Mg(2+) serves as cofactor. Post-translationally, may be phosphorylated by mek-1 on Ser-198 and/or Tyr-200. Phosphorylation is induced upon Cu(2+) and arsenite-mediated cell stimulation and by fasting. In terms of tissue distribution, expressed in somatic and germline tissues.

The protein localises to the cytoplasm. It carries out the reaction L-seryl-[protein] + ATP = O-phospho-L-seryl-[protein] + ADP + H(+). The enzyme catalyses L-threonyl-[protein] + ATP = O-phospho-L-threonyl-[protein] + ADP + H(+). Its activity is regulated as follows. Activated by mek-1 mediated phosphorylation. No differences in basal activation between larvae and adults. Inhibited by phosphatase vhp-1. In terms of biological role, mitogen-activated protein kinase which is an essential component of the JNK pathway composed of mlk-1, mek-1 and kgb-1. Phosphorylates the transcription factor fos-1 which prevents fos-1 dimerization and promoter binding and results in activation of target genes including F53A9.2/kreg-1 and lys-3/kreg-2. Phosphorylates jun-1 and activates the AP-1 transcription factor which is a heterodimer of jun-1 and fos-1. Phosphorylates glh-1 in vitro which may play a role in controlling glh-1 protein levels in the germline by targeting it for degradation by the proteasome. Required for oogenesis and probably also for spermatogenesis. Involved in the response to environmental stress such as heavy metals, infection and protein folding stress in an age-dependent manner. In larvae, has a protective role which becomes detrimental in adults. May control susceptibility to infection, heavy metal stress and premature lethality by regulating daf-16 cellular localization. Involved in the transcriptional response to bacterial pore-forming toxins and to fasting. Required for fasting-induced longevity. Involved in axon regeneration after injury downstream of tyrosine receptor svh-2. In Caenorhabditis elegans, this protein is GLH-binding kinase 1.